Reading from the N-terminus, the 445-residue chain is Phosphoglucosamine mutase (445 aa).

The active-site Phosphoserine intermediate is Ser-99. Mg(2+) contacts are provided by Ser-99, Asp-242, Asp-244, and Asp-246. A Phosphoserine modification is found at Ser-99.

It belongs to the phosphohexose mutase family. Requires Mg(2+) as cofactor. Activated by phosphorylation.

It carries out the reaction alpha-D-glucosamine 1-phosphate = D-glucosamine 6-phosphate. Catalyzes the conversion of glucosamine-6-phosphate to glucosamine-1-phosphate. This chain is Phosphoglucosamine mutase, found in Campylobacter jejuni (strain RM1221).